We begin with the raw amino-acid sequence, 865 residues long: Aconitate hydratase B (865 aa).

Residues Arg-191, 244–246 (SSR), 414–416 (QDT), and Ser-498 each bind substrate. Residues Cys-710, Cys-769, and Cys-772 each coordinate [4Fe-4S] cluster. Substrate is bound by residues Arg-791 and Arg-796.

This sequence belongs to the aconitase/IPM isomerase family. Monomer. AcnB can also form a homodimer. The monomer-homodimer transition is dependent on iron availability and the carboxymethylation of C-273 inhibits the dimer formation. It depends on [4Fe-4S] cluster as a cofactor.

The catalysed reaction is citrate = D-threo-isocitrate. The enzyme catalyses (2S,3R)-3-hydroxybutane-1,2,3-tricarboxylate = 2-methyl-cis-aconitate + H2O. The protein operates within organic acid metabolism; propanoate degradation. It functions in the pathway carbohydrate metabolism; tricarboxylic acid cycle; isocitrate from oxaloacetate: step 2/2. In terms of biological role, involved in the catabolism of short chain fatty acids (SCFA) via the tricarboxylic acid (TCA)(acetyl degradation route) and the 2-methylcitrate cycle I (propionate degradation route). Catalyzes the reversible isomerization of citrate to isocitrate via cis-aconitate. Also catalyzes the hydration of 2-methyl-cis-aconitate to yield (2R,3S)-2-methylisocitrate. The apo form of AcnB functions as a RNA-binding regulatory protein. During oxidative stress inactive AcnB apo-enzyme without iron sulfur clusters binds the acnB mRNA 3' UTRs (untranslated regions), stabilizes acnB mRNA and increases AcnB synthesis, thus mediating a post-transcriptional positive autoregulatory switch. AcnB also decreases the stability of the sodA transcript. This is Aconitate hydratase B from Escherichia coli (strain K12).